Consider the following 725-residue polypeptide: Exocyst complex component 8 (725 aa).

At serine 19 the chain carries Phosphoserine. The segment at 137-159 is disordered; the sequence is AGFFSTPGGASRDGSGPGEEGKQ. The residue at position 142 (threonine 142) is a Phosphothreonine. The PH domain maps to 182 to 282; the sequence is YLVYNGDLVE…WLEVLEDTKR (101 aa). Residues 285 to 328 form a disordered region; the sequence is SEKRRREQEEAAAPRGPPQVTSKATNPFEDDEEEEPAVPEVEEE. A compositionally biased stretch (acidic residues) spans 312–328; it reads FEDDEEEEPAVPEVEEE.

Belongs to the EXO84 family. The exocyst complex is composed of EXOC1, EXOC2, EXOC3, EXOC4, EXOC5, EXOC6, EXOC7 and EXOC8. Interacts (via PH domain) with GTP-bound RALA and RALB. Interacts with SH3BP1; required for the localization of both SH3BP1 and the exocyst to the leading edge of migrating cells.

It localises to the cytoplasm. The protein localises to the perinuclear region. It is found in the cell projection. Its subcellular location is the growth cone. In terms of biological role, component of the exocyst complex involved in the docking of exocytic vesicles with fusion sites on the plasma membrane. This Homo sapiens (Human) protein is Exocyst complex component 8 (EXOC8).